A 131-amino-acid chain; its full sequence is Small ribosomal subunit protein uS8c (131 aa).

Belongs to the universal ribosomal protein uS8 family. In terms of assembly, part of the 30S ribosomal subunit.

The protein localises to the plastid. It localises to the chloroplast. One of the primary rRNA binding proteins, it binds directly to 16S rRNA central domain where it helps coordinate assembly of the platform of the 30S subunit. The chain is Small ribosomal subunit protein uS8c (rps8) from Phalaenopsis aphrodite subsp. formosana (Moth orchid).